A 318-amino-acid polypeptide reads, in one-letter code: Methionyl-tRNA formyltransferase (318 aa).

Serine 112–proline 115 contributes to the (6S)-5,6,7,8-tetrahydrofolate binding site.

Belongs to the Fmt family.

The catalysed reaction is L-methionyl-tRNA(fMet) + (6R)-10-formyltetrahydrofolate = N-formyl-L-methionyl-tRNA(fMet) + (6S)-5,6,7,8-tetrahydrofolate + H(+). In terms of biological role, attaches a formyl group to the free amino group of methionyl-tRNA(fMet). The formyl group appears to play a dual role in the initiator identity of N-formylmethionyl-tRNA by promoting its recognition by IF2 and preventing the misappropriation of this tRNA by the elongation apparatus. The protein is Methionyl-tRNA formyltransferase of Haemophilus influenzae (strain ATCC 51907 / DSM 11121 / KW20 / Rd).